Here is a 450-residue protein sequence, read N- to C-terminus: Zinc metalloproteinase nas-13 (450 aa).

Residues 1-31 (MPSPTSSSASVFSSHLFFVFCIFSQIAQSYA) form the signal peptide. Asn-68 carries an N-linked (GlcNAc...) asparagine glycan. A Peptidase M12A domain is found at 110–303 (NAVRQTYLKW…YKINMLYNCP (194 aa)). 2 disulfides stabilise this stretch: Cys-152–Cys-302 and Cys-174–Cys-193. His-201 contributes to the Zn(2+) binding site. Glu-202 is a catalytic residue. Residues His-205 and His-211 each coordinate Zn(2+). Residue Asn-225 is glycosylated (N-linked (GlcNAc...) asparagine). Positions 349-351 (RGD) match the Cell attachment site motif. Disulfide bonds link Cys-368–Cys-404, Cys-375–Cys-397, Cys-384–Cys-401, Cys-414–Cys-450, Cys-421–Cys-443, and Cys-430–Cys-447. 2 consecutive ShKT domains span residues 368-404 (CEDR…CGKC) and 414-450 (CEDA…CNFC). Asn-431 carries N-linked (GlcNAc...) asparagine glycosylation.

Zn(2+) serves as cofactor.

The protein resides in the secreted. Metalloprotease. The sequence is that of Zinc metalloproteinase nas-13 (nas-13) from Caenorhabditis elegans.